The primary structure comprises 584 residues: Cationic amino acid transporter 7, chloroplastic (584 aa).

The transit peptide at 1-49 directs the protein to the chloroplast; that stretch reads MEAQYRNHDGDTSFSSLRVYLNSLSDTPSRFSRRAVSVSTSYDEMSRVR. The next 14 helical transmembrane spans lie at 62 to 82, 90 to 110, 131 to 151, 185 to 205, 214 to 234, 254 to 274, 293 to 313, 346 to 366, 396 to 416, 417 to 437, 449 to 469, 480 to 500, 508 to 528, and 540 to 560; these read WYDL…FVTT, AGPS…LSAF, ITFG…DYVL, GFNE…FVIC, VNMV…VMGF, FFPF…LSYI, IPMG…LMAI, VVGI…MLGQ, ASAF…LNVL, LNLV…AVIF, WPTL…TLVW, FILG…HCVV, FWGV…NIFL, and FGFF…HASY.

Belongs to the amino acid-polyamine-organocation (APC) superfamily. Cationic amino acid transporter (CAT) (TC 2.A.3.3) family.

The protein resides in the plastid. The protein localises to the chloroplast membrane. Functionally, permease involved in the transport of the cationic amino acids. The chain is Cationic amino acid transporter 7, chloroplastic (CAT7) from Arabidopsis thaliana (Mouse-ear cress).